The sequence spans 272 residues: Putative phosphatase BU028/BU029 (272 aa).

Asp8 functions as the Nucleophile in the catalytic mechanism. Asp8 provides a ligand contact to Mg(2+). Residue Leu9 coordinates phosphate. Asp10 provides a ligand contact to Mg(2+). Phosphate contacts are provided by residues 42 to 43 (SG) and Lys191. Position 214 (Asp214) interacts with Mg(2+). Asn217 is a binding site for phosphate.

Belongs to the HAD-like hydrolase superfamily. Cof family. Requires Mg(2+) as cofactor.

The sequence is that of Putative phosphatase BU028/BU029 from Buchnera aphidicola subsp. Acyrthosiphon pisum (strain APS) (Acyrthosiphon pisum symbiotic bacterium).